A 923-amino-acid polypeptide reads, in one-letter code: Protein prickle (923 aa).

The disordered stretch occupies residues 1-196; sequence MSYPYQKSHH…HPFHSPASAA (196 aa). Over residues 11–34 the composition is skewed to low complexity; it reads QTQQPQQNGHPQHQLMLQQQQQAD. Positions 37–49 are enriched in basic residues; it reads PHHHHHHHVHHAT. Composition is skewed to low complexity over residues 59–73 and 106–118; these read RSPL…LYSG and MPGM…PPGM. Residues 122–134 show a composition bias toward gly residues; it reads LGGGGGGGGGGSA. 2 stretches are compositionally biased toward low complexity: residues 152–169 and 184–196; these read STVT…SARS and SSHH…ASAA. Residues 275–383 form the PET domain; that stretch reads GGGHNYSQSD…TVKQITTTLI (109 aa). 3 LIM zinc-binding domains span residues 382-446, 447-507, and 508-570; these read LICE…ETLK, PRCS…MFAE, and YCDY…GEPP. Disordered regions lie at residues 571 to 668 and 703 to 867; these read TPSD…LDLT and GPIA…SSAD. The segment covering 709-718 has biased composition (gly residues); that stretch reads NGNGPTGGGP. Residues 738-748 show a composition bias toward polar residues; it reads ESPSFSGTNSP. Over residues 777-786 the composition is skewed to basic and acidic residues; that stretch reads HSIKEVRFEG. Polar residues predominate over residues 792–805; it reads LPRTKSYCQRNGGQ. The span at 817–827 shows a compositional bias: acidic residues; that stretch reads SDDDELAEDET. The segment covering 840–852 has biased composition (basic and acidic residues); sequence QREQQRPVDDSDA. A compositionally biased stretch (low complexity) spans 853–865; sequence RSVCSTCSSSSSS.

It belongs to the prickle / espinas / testin family. Interacts with dsh; PET and LIM domains interact with dsh DEP domain, in wing cells. Interacts with Vang in photoreceptor cells.

It is found in the cell membrane. Its function is as follows. Acts in a planar cell polarity (PCP) complex; polarization along the apical/basal axis of epithelial cells. PCP signaling in the wing disk requires the receptor fz and the cytoplasmic proteins dsh and pk. These act in a feedback loop leading to activation of the jnk cascade and subsequent polarized arrangement of hairs and bristles. Dgo and pk compete with one another for dsh binding, thereby modulating fz dsh activity and ensuring tight control over fz PCP signaling. Vang, stan and pk function together to regulate the establishment of tissue polarity in the adult eye. The polypeptide is Protein prickle (Anopheles gambiae (African malaria mosquito)).